Consider the following 52-residue polypeptide: Conotoxin-like peptide 2 (52 aa).

An N-terminal signal peptide occupies residues 1–18 (MKFSTILLLVCPTVALSA). 3 cysteine pairs are disulfide-bonded: cysteine 24–cysteine 38, cysteine 31–cysteine 42, and cysteine 37–cysteine 49.

It is found in the secreted. The sequence is that of Conotoxin-like peptide 2 (CTL-2) from Orgyia pseudotsugata (Douglas-fir tussock moth).